Reading from the N-terminus, the 279-residue chain is uncharacterized protein (279 aa).

The next 3 membrane-spanning stretches (helical) occupy residues 1 to 21, 38 to 58, and 131 to 151; these read MGFI…LCGI, FACH…SVVA, and SLRY…VFID.

It belongs to the 1-acyl-sn-glycerol-3-phosphate acyltransferase family.

The protein resides in the endoplasmic reticulum membrane. This is an uncharacterized protein from Schizosaccharomyces pombe (strain 972 / ATCC 24843) (Fission yeast).